Here is a 747-residue protein sequence, read N- to C-terminus: MIAKHVPMRSLGKSDFAGLANYITDAQSKDHRLGHVQATNCEAGSIQDAITEVLATQHTNTRAKGDKTYHLIVSFRAGEQPSADTLRAIEERICVGLGYGEHQRISAVHNDTDNLHIHIAINKIHPTRHTMHEPYYPHRALAELCTALERDYGLERDNHEPRKRGAEGRAADMERHAGVESLVGWIKRECLDEIKGAQSWQELHQVMRDNGMELRVRANGLVFEAGDGTMVKASTVARDLSKPSLEARLGPFEASPERQAQTTAKRQYRKDPIRLRVNTVELYAKYKAEQQSLTTARAQALERARHRKDRLIEAAKRSNRLRRATIKVVGEGRANKKLLYAQASKALRSEIQAINKQFQQERTALYAEHSRRTWADWLKKEAQHGGADALAALRAREAAQGLKGNTIRGEGQAKPGHAPAVDNITKKGTIIFRAGMSAVRDDGDRLQVSREATREGLQEALRLAMQRYGNRITVNGTVEFKAQMIRAAVDSQLPITFTDPALESRRQALLNKENTHERTERPEHRGRTGRGAGGPGQRPAADQHATGAAAVARAGDGRPAAGRGDRADAGLHAATVHRKPDVGRLGRKPPPQSQHRLRALSELGVVRIAGGSEVLLPRDVPRHVEQQGTQPDHALRRGISRPGTGVGQTPPGVAAADKYIAEREAKRLKGFDIPKHSRYTAGDGALTFQGTRTIEGQALALLKRGDEVMVMPIDQATARRLTRIAVGRDAVSITAKGSIKTSKGRSR.

Disordered stretches follow at residues 510–594 (LNKE…PQSQ) and 624–652 (VEQQ…TPPG). The segment covering 513–526 (ENTHERTERPEHRG) has biased composition (basic and acidic residues). The span at 537-562 (QRPAADQHATGAAAVARAGDGRPAAG) shows a compositional bias: low complexity.

Its function is as follows. The initiation process of transfer DNA synthesis requires the interaction of at least three plasmid-specific components (TraH, TraI, and TraJ) at the transfer origin resulting in the assembly of a specialized nucleoprotein complex - the relaxosome. Site and strand specific cleavage at the transfer origin is dependent on TraI and TraJ. The protein is Protein TraI (traI) of Escherichia coli.